Consider the following 843-residue polypeptide: Translation initiation factor IF-2 (843 aa).

Disordered stretches follow at residues 55–185 (AEAV…EDRD) and 209–228 (KVEE…QVKV). Basic and acidic residues predominate over residues 62-106 (PQEKPKKSAPKKEEKPKEEVKKEAEEKVAASKKEEEKPQEKKSVE). Positions 114–128 (LKKRRGLVIVKKKRP) are enriched in basic residues. Residues 129 to 141 (KVEPKVEEKEAKQ) show a composition bias toward basic and acidic residues. Positions 156–165 (LKRKPKKAKK) are enriched in basic residues. Composition is skewed to basic and acidic residues over residues 171–185 (KKNE…EDRD) and 209–221 (KVEE…EPQK). A tr-type G domain is found at 342–511 (ERPPVITIMG…LLQAEIMELK (170 aa)). The interval 351 to 358 (GHVDHGKT) is G1. Position 351–358 (351–358 (GHVDHGKT)) interacts with GTP. Residues 376 to 380 (GITQH) form a G2 region. Residues 397–400 (DTPG) form a G3 region. GTP is bound by residues 397 to 401 (DTPGH) and 451 to 454 (NKID). The segment at 451–454 (NKID) is G4. Residues 487-489 (SAK) are G5.

Belongs to the TRAFAC class translation factor GTPase superfamily. Classic translation factor GTPase family. IF-2 subfamily.

It localises to the cytoplasm. One of the essential components for the initiation of protein synthesis. Protects formylmethionyl-tRNA from spontaneous hydrolysis and promotes its binding to the 30S ribosomal subunits. Also involved in the hydrolysis of GTP during the formation of the 70S ribosomal complex. This chain is Translation initiation factor IF-2, found in Nitratiruptor sp. (strain SB155-2).